Reading from the N-terminus, the 137-residue chain is Nucleoside diphosphate kinase (137 aa).

ATP is bound by residues Lys9, Phe57, Arg85, Thr91, Arg102, and Asn112. Catalysis depends on His115, which acts as the Pros-phosphohistidine intermediate.

Belongs to the NDK family. As to quaternary structure, homotetramer. Requires Mg(2+) as cofactor.

It localises to the cytoplasm. It catalyses the reaction a 2'-deoxyribonucleoside 5'-diphosphate + ATP = a 2'-deoxyribonucleoside 5'-triphosphate + ADP. The catalysed reaction is a ribonucleoside 5'-diphosphate + ATP = a ribonucleoside 5'-triphosphate + ADP. Functionally, major role in the synthesis of nucleoside triphosphates other than ATP. The ATP gamma phosphate is transferred to the NDP beta phosphate via a ping-pong mechanism, using a phosphorylated active-site intermediate. This is Nucleoside diphosphate kinase from Geobacter sp. (strain M21).